The following is a 304-amino-acid chain: UDP-N-acetylenolpyruvoylglucosamine reductase (304 aa).

The FAD-binding PCMH-type domain maps to 31–196 (KVGGPADYLA…ISAKFNLKPG (166 aa)). Residue Arg-175 is part of the active site. Residue Ser-225 is the Proton donor of the active site. The active site involves Glu-295.

It belongs to the MurB family. It depends on FAD as a cofactor.

Its subcellular location is the cytoplasm. It carries out the reaction UDP-N-acetyl-alpha-D-muramate + NADP(+) = UDP-N-acetyl-3-O-(1-carboxyvinyl)-alpha-D-glucosamine + NADPH + H(+). Its pathway is cell wall biogenesis; peptidoglycan biosynthesis. In terms of biological role, cell wall formation. The protein is UDP-N-acetylenolpyruvoylglucosamine reductase of Streptococcus thermophilus (strain ATCC BAA-491 / LMD-9).